Here is a 290-residue protein sequence, read N- to C-terminus: Agglutinin-2 (290 aa).

The first 35 residues, 1–35 (MAISNTNLLQTKKPISLPLLAFITLFLMLLNRVNS), serve as a signal peptide directing secretion. A glycan (N-linked (GlcNAc...) asparagine) is linked at Asn155. Mn(2+) is bound by residues Glu165 and Asp167. Ca(2+) is bound by residues Asp167, Asn171, and Asp175. Residues Asp175 and His180 each coordinate Mn(2+). The N-linked (GlcNAc...) asparagine glycan is linked to Asn200.

This sequence belongs to the leguminous lectin family. Homotetramer.

Functionally, mannose/glucose binding bark lectin. Its function is as follows. Bark lectins are storage proteins that probably maintain stocks of nitrogen during dormant period. Self-aggregatable molecules that can bind their own carbohydrate side chains. They could also play a role in the plant's defense against phytophagous invertebrates or herbivorous higher animals. The polypeptide is Agglutinin-2 (Cladrastis kentukea (Yellow wood)).